The sequence spans 548 residues: Rhodopsin kinase GRK7 (548 aa).

Serine 34 is modified (phosphoserine; by PKA). Positions 54–171 constitute an RGS domain; sequence FHSLCEQQPI…LASPFYDRFL (118 aa). The region spanning 186-449 is the Protein kinase domain; that stretch reads FTEFRVLGKG…ADDPRKHPFF (264 aa). Residues 192–200 and lysine 215 contribute to the ATP site; that span reads LGKGGFGEV. Aspartate 311 acts as the Proton acceptor in catalysis. An AGC-kinase C-terminal domain is found at 450–515; that stretch reads QTVNFPRLEA…GAVPVAWQEE (66 aa). Positions 523–548 are disordered; sequence EELNDPNRPSGDGKGDSSKSGVCLLL. Cysteine 545 is modified (cysteine methyl ester). Cysteine 545 carries S-geranylgeranyl cysteine lipidation. Residues 546-548 constitute a propeptide, removed in mature form; sequence LLL.

The protein belongs to the protein kinase superfamily. AGC Ser/Thr protein kinase family. GPRK subfamily. In terms of assembly, interacts (when prenylated) with PDE6D; this promotes release from membranes. Post-translationally, autophosphorylated. Phosphorylation at Ser-34 is regulated by light and activated by cAMP. In terms of tissue distribution, retina. Cones and rod.

The protein resides in the membrane. It carries out the reaction L-threonyl-[rhodopsin] + ATP = O-phospho-L-threonyl-[rhodopsin] + ADP + H(+). The enzyme catalyses L-seryl-[rhodopsin] + ATP = O-phospho-L-seryl-[rhodopsin] + ADP + H(+). Inhibited by phosphorylation of Ser-34. Functionally, retina-specific kinase involved in the shutoff of the photoresponse and adaptation to changing light conditions via cone opsin phosphorylation, including rhodopsin (RHO). This Ictidomys tridecemlineatus (Thirteen-lined ground squirrel) protein is Rhodopsin kinase GRK7 (GRK7).